Reading from the N-terminus, the 284-residue chain is Kynurenine formamidase avaC (284 aa).

The HGGXW signature appears at 47–51; the sequence is HGGGW. Ser-130 functions as the Nucleophile in the catalytic mechanism.

This sequence belongs to the kynurenine formamidase family.

It carries out the reaction N-formyl-L-kynurenine + H2O = L-kynurenine + formate + H(+). It participates in secondary metabolite metabolism. Its function is as follows. Kynurenine formamidase; part of the cluster that mediates the biosynthesis of a highly modified cyclo-arginine-tryptophan dipeptide (cRW). Within the pathway, avaC catalyzes the deformylation of the cyclo-Arg-formylkynurenine iketopiperazine (DKP), produced by the FAD-dependent monooxygenase avaB. The first step of the pathway is perfornmed by the arginine-containing cyclodipeptide synthase (RCPDS) avaA that acts as the scaffold-generating enzyme and is responsible for formation of the cyclo-Arg-Trp (cRW) diketopiperazine. AvaB then acts as a multifunctional flavoenzyme that is responsible for generating the cyclo-Arg-formylkynurenine DKP, which can be deformylated by avaC. AvaB then further catalyzes an additional N-oxidation followed by cyclization and dehydration. The next step is an N-acetylation of the guanidine group catalyzed by the arginine N-acetyltransferase avaD. The roles of the additional enzymes identified within the ava cluster still have to be determined. This is Kynurenine formamidase avaC from Aspergillus versicolor.